The following is a 130-amino-acid chain: Small ribosomal subunit protein uS8 (130 aa).

It belongs to the universal ribosomal protein uS8 family. Part of the 30S ribosomal subunit. Contacts proteins S5 and S12.

In terms of biological role, one of the primary rRNA binding proteins, it binds directly to 16S rRNA central domain where it helps coordinate assembly of the platform of the 30S subunit. In Nitrosococcus oceani (strain ATCC 19707 / BCRC 17464 / JCM 30415 / NCIMB 11848 / C-107), this protein is Small ribosomal subunit protein uS8.